The sequence spans 108 residues: MAKQLIQSEEEFKRIAEQEGVFVFLKHSTTCPISQAAFHEFDAFANQHEDVPAYYLQVQEARPLSNFIAETYGVKHESPQIFIIQNGEVKWHTSHSQITEAAIEQHLS.

Position 31 is an S-bacillithiol cysteine disulfide (C31).

Interacts with AbrB, BdhA, Bdr, BrxB, FolD, GapA, GapB, GatA, PfkA, PyrAA, PyrAB, PyrE, PyrG, PyrH, RpsB, RpsK, RpsL, SalA, SucC, Tuf and YtsJ. In terms of processing, cys can react with bacillithiol (BSH) to form mixed disulfides. S-bacillithiolation protects Cys residues against overoxidation by acting as a redox switch in response to oxidative stress.

Its function is as follows. S-bacillithiolation is the formation of mixed disulfide bonds between protein thiols and the general thiol reductant bacillithiol (BSH) under oxidative stress. BSH is an equivalent of glutathione (GSH) in Firmicutes. This protein is a monothiol bacilliredoxin, which debacillithiolates (removes BSH) the S-bacillithiolated glyceraldehyde-3-phosphate dehydrogenases (GAPDHs) GapA and GapB in vivo and probably a number of other oxidized cytosolic proteins. Debacillithiolates the S-bacillithiolated Bdr (Bdr-SSB) and BrxB (BrxB-SSB) in vitro. Involved in maintaining redox homeostasis in response to disulfide stress conditions. The chain is Monothiol bacilliredoxin BrxC from Bacillus subtilis (strain 168).